A 156-amino-acid polypeptide reads, in one-letter code: 6,7-dimethyl-8-ribityllumazine synthase (156 aa).

5-amino-6-(D-ribitylamino)uracil-binding positions include Phe23, 57-59 (AFE), and 81-83 (AVI). (2S)-2-hydroxy-3-oxobutyl phosphate is bound at residue 86–87 (ST). His89 serves as the catalytic Proton donor. Phe114 serves as a coordination point for 5-amino-6-(D-ribitylamino)uracil. (2S)-2-hydroxy-3-oxobutyl phosphate is bound at residue Arg128.

It belongs to the DMRL synthase family.

It catalyses the reaction (2S)-2-hydroxy-3-oxobutyl phosphate + 5-amino-6-(D-ribitylamino)uracil = 6,7-dimethyl-8-(1-D-ribityl)lumazine + phosphate + 2 H2O + H(+). It functions in the pathway cofactor biosynthesis; riboflavin biosynthesis; riboflavin from 2-hydroxy-3-oxobutyl phosphate and 5-amino-6-(D-ribitylamino)uracil: step 1/2. Functionally, catalyzes the formation of 6,7-dimethyl-8-ribityllumazine by condensation of 5-amino-6-(D-ribitylamino)uracil with 3,4-dihydroxy-2-butanone 4-phosphate. This is the penultimate step in the biosynthesis of riboflavin. The protein is 6,7-dimethyl-8-ribityllumazine synthase of Campylobacter curvus (strain 525.92).